Consider the following 139-residue polypeptide: Putative pre-16S rRNA nuclease (139 aa).

Belongs to the YqgF nuclease family.

Its subcellular location is the cytoplasm. Functionally, could be a nuclease involved in processing of the 5'-end of pre-16S rRNA. The sequence is that of Putative pre-16S rRNA nuclease from Dictyoglomus thermophilum (strain ATCC 35947 / DSM 3960 / H-6-12).